A 319-amino-acid polypeptide reads, in one-letter code: G-protein coupled receptor 171 (319 aa).

The Extracellular segment spans residues 1 to 21 (MTNSSTFCPVYRDLEPFTYFF). N-linked (GlcNAc...) asparagine glycosylation is present at Asn-3. The helical transmembrane segment at 22–42 (YLVFLIGIIGSCFATWAFIQK) threads the bilayer. Residues 43–48 (NTNHRC) are Cytoplasmic-facing. Residues 49–69 (VSIYLINLLTADFLLTLALPV) form a helical membrane-spanning segment. Topologically, residues 70–89 (KITVDLGVAPWKLRIFHCQV) are extracellular. The helical transmembrane segment at 90-110 (TACLIYINMYLSIIFLAFVSI) threads the bilayer. Over 111-132 (DRCLQLTYSCKIYRIQEPGFAK) the chain is Cytoplasmic. The helical transmembrane segment at 133-153 (MISAVVWLMVLLIMVPNMIIP) threads the bilayer. Topologically, residues 154-181 (IKDIKEKPNVGCMEFKSEFGRNWHLLTN) are extracellular. Residues 182–202 (FISIAIFFNFSAIILISNCLV) traverse the membrane as a helical segment. The Cytoplasmic segment spans residues 203-224 (IRQLYRNKDNENYPNVKRALIS). Residues 225–245 (ILLVTTGYIICFVPYHIVRIP) traverse the membrane as a helical segment. At 246–268 (YTLSQTEVISDCSTRISLFKAKE) the chain is on the extracellular side. A helical transmembrane segment spans residues 269–289 (ATLLLAVSNLCFDPILYYHLS). At 290 to 319 (KAFRLKITETFASHKESKAQKEKPRSENNA) the chain is on the cytoplasmic side.

It belongs to the G-protein coupled receptor 1 family.

It localises to the cell membrane. G-protein coupled receptor for Big LEN, a 16-amino acid neuropeptide produced from the precursor protein, proSAAS (encoded by PCSK1N). Acts through a G(i)-alpha-mediated pathway in response to bigLEN. Big LEN-GPR171 system plays an important role in regulating feeding and metabolism. Also plays a role in modulating fear and anxiety-like behaviors in the basolateral amygdala. Big LEN-GPR171 modulates the mu-type opioid receptor signaling and antinociception. Acts as a negative regulator T cell function. The chain is G-protein coupled receptor 171 (GPR171) from Bos taurus (Bovine).